The sequence spans 222 residues: Peroxiredoxin (222 aa).

The region spanning 7–163 (PRLGEPAPAF…VIRLVDALQT (157 aa)) is the Thioredoxin domain. Cys-49 functions as the Cysteine sulfenic acid (-SOH) intermediate in the catalytic mechanism. A substrate-binding site is contributed by Arg-126. A disulfide bridge connects residues Cys-212 and Cys-218.

The protein belongs to the peroxiredoxin family. Prx6 subfamily. Homodecamer. Pentamer of dimers that assemble into a ring structure.

It localises to the cytoplasm. It carries out the reaction a hydroperoxide + [thioredoxin]-dithiol = an alcohol + [thioredoxin]-disulfide + H2O. Thiol-specific peroxidase that catalyzes the reduction of hydrogen peroxide and organic hydroperoxides to water and alcohols, respectively. Plays a role in cell protection against oxidative stress by detoxifying peroxides. The sequence is that of Peroxiredoxin from Aquifex aeolicus (strain VF5).